The following is a 177-amino-acid chain: MSETDAAATLPADARDAFKSPIGPVYTDAAALLADATPPIIAVGDVVTYHLVDAGQTPAVAVVDGRTERDAVRPAVRDAIPEPDLTVASEPGTVSVSLVRALVDAIADADATVVSVDGEEDLAVVPAVLAAPADATVVYGQPGEGMVRVPVTDAGRAEMRERADRLETTAAFWRLVD.

GTP contacts are provided by D45, V46, V47, D64, and E120.

It belongs to the GTP-dependent DPCK family.

It carries out the reaction 3'-dephospho-CoA + GTP = GDP + CoA + H(+). The protein operates within cofactor biosynthesis; coenzyme A biosynthesis. Its function is as follows. Catalyzes the GTP-dependent phosphorylation of the 3'-hydroxyl group of dephosphocoenzyme A to form coenzyme A (CoA). In Halobacterium salinarum (strain ATCC 29341 / DSM 671 / R1), this protein is GTP-dependent dephospho-CoA kinase.